A 92-amino-acid chain; its full sequence is Small ribosomal subunit protein uS19 (92 aa).

It belongs to the universal ribosomal protein uS19 family.

Functionally, protein S19 forms a complex with S13 that binds strongly to the 16S ribosomal RNA. This is Small ribosomal subunit protein uS19 from Rickettsia typhi (strain ATCC VR-144 / Wilmington).